The sequence spans 406 residues: Betaine--homocysteine S-methyltransferase 1 (406 aa).

Residues K11–L314 form the Hcy-binding domain. 3 positions are modified to N6-succinyllysine: K40, K93, and K98. Residue C217 coordinates Zn(2+). K232 and K241 each carry N6-succinyllysine. 2 residues coordinate Zn(2+): C299 and C300. S330 bears the Phosphoserine mark. N6-succinyllysine is present on residues K340 and K377.

As to quaternary structure, homotetramer. The cofactor is Zn(2+).

The protein resides in the cytoplasm. The protein localises to the cytosol. Its subcellular location is the nucleus. It carries out the reaction L-homocysteine + glycine betaine = N,N-dimethylglycine + L-methionine. It functions in the pathway amine and polyamine degradation; betaine degradation; sarcosine from betaine: step 1/2. Its pathway is amino-acid biosynthesis; L-methionine biosynthesis via de novo pathway; L-methionine from L-homocysteine (BhmT route): step 1/1. Involved in the regulation of homocysteine metabolism. Converts betaine and homocysteine to dimethylglycine and methionine, respectively. This reaction is also required for the irreversible oxidation of choline. This is Betaine--homocysteine S-methyltransferase 1 (BHMT) from Pongo abelii (Sumatran orangutan).